The sequence spans 364 residues: Protein-glutamate methylesterase/protein-glutamine glutaminase (364 aa).

The Response regulatory domain occupies 5–123 (RVLVVDDTIL…PAANKAALAN (119 aa)). The residue at position 56 (Asp-56) is a 4-aspartylphosphate. One can recognise a CheB-type methylesterase domain in the interval 174–364 (EIVVIGISTG…QEIVHTVKLY (191 aa)). Active-site residues include Ser-181, His-208, and Asp-306.

This sequence belongs to the CheB family. Post-translationally, phosphorylated by CheA. Phosphorylation of the N-terminal regulatory domain activates the methylesterase activity.

It is found in the cytoplasm. It catalyses the reaction [protein]-L-glutamate 5-O-methyl ester + H2O = L-glutamyl-[protein] + methanol + H(+). The catalysed reaction is L-glutaminyl-[protein] + H2O = L-glutamyl-[protein] + NH4(+). Involved in chemotaxis. Part of a chemotaxis signal transduction system that modulates chemotaxis in response to various stimuli. Catalyzes the demethylation of specific methylglutamate residues introduced into the chemoreceptors (methyl-accepting chemotaxis proteins or MCP) by CheR. Also mediates the irreversible deamidation of specific glutamine residues to glutamic acid. The protein is Protein-glutamate methylesterase/protein-glutamine glutaminase of Desulfotalea psychrophila (strain LSv54 / DSM 12343).